A 444-amino-acid chain; its full sequence is Tol-Pal system protein TolB (444 aa).

The N-terminal stretch at 1-19 (MRNIIYFILSLLFSVTSYA) is a signal peptide.

This sequence belongs to the TolB family. The Tol-Pal system is composed of five core proteins: the inner membrane proteins TolA, TolQ and TolR, the periplasmic protein TolB and the outer membrane protein Pal. They form a network linking the inner and outer membranes and the peptidoglycan layer.

The protein localises to the periplasm. Part of the Tol-Pal system, which plays a role in outer membrane invagination during cell division and is important for maintaining outer membrane integrity. This Rickettsia rickettsii (strain Iowa) protein is Tol-Pal system protein TolB.